The sequence spans 317 residues: GPI-specific phospholipase A2-like PGAP3 (317 aa).

The first 18 residues, 1-18, serve as a signal peptide directing secretion; the sequence is MAPFLVLFLAGVVSASRG. Over 19 to 93 the chain is Lumenal; sequence DREPVYRDCV…QFHGKWPFSR (75 aa). Residue Asn35 is glycosylated (N-linked (GlcNAc...) asparagine). The chain crosses the membrane as a helical span at residues 94–114; it reads FLFFQEPASALASFLNGVASL. Residues 115-132 are Cytoplasmic-facing; it reads LMLFRYRSSVPSSCQMYR. The chain crosses the membrane as a helical span at residues 133-153; that stretch reads TCLAFSMVSVNAWFWSTIFHT. Residues 154–163 lie on the Lumenal side of the membrane; sequence RDTALTEKMD. Residues 164–180 form a helical membrane-spanning segment; it reads YFCASSVILHSIYLCCM. Topologically, residues 181-189 are cytoplasmic; sequence RTFGLQYPS. The helical transmembrane segment at 190–210 threads the bilayer; the sequence is IANAFGAFLVLLFACHISYLT. Residues 211 to 219 lie on the Lumenal side of the membrane; the sequence is LGRFDYSYN. Residues 220–240 traverse the membrane as a helical segment; the sequence is MAANTSFGIVNLMWWLAWCMW. Residues 241 to 251 are Cytoplasmic-facing; the sequence is RRFHQPYLWKC. A helical membrane pass occupies residues 252-272; it reads VLVVVLLQSLALLELLDFPPV. Met273 is a topological domain (lumenal). A helical transmembrane segment spans residues 274–293; that stretch reads WILDAHALWHFSTIPLHFLF. The Cytoplasmic portion of the chain corresponds to 294–317; the sequence is YSFLRDDSLYLLKVNHDDDIPKLD.

The protein belongs to the PGAP3 family.

The protein resides in the golgi apparatus membrane. Functionally, involved in the fatty acid remodeling steps of GPI-anchor maturation where the unsaturated acyl chain at sn-2 of inositol phosphate is replaced by a saturated stearoyl chain. May catalyze the first step of the fatty acid remodeling, by removing the unsaturated acyl chain at sn-2 of inositol phosphate, generating a lyso-GPI intermediate. The fatty acid remodeling steps is critical for the integration of GPI-APs into lipid rafts. The protein is GPI-specific phospholipase A2-like PGAP3 of Xenopus laevis (African clawed frog).